The chain runs to 453 residues: Signal transduction histidine-protein kinase ArlS (453 aa).

2 consecutive transmembrane segments (helical) span residues 14–34 (ITTL…IFFL) and 157–177 (FVAI…SYIF). An HAMP domain is found at 179 to 232 (TQLTKPLVTMSNKMIQIRRDGFQNKLELKTNYEETDNLIDTFNDMMYQIEESFN). Residues 240–453 (DASHELRTPL…QYTTFKIIFK (214 aa)) enclose the Histidine kinase domain. Position 243 is a phosphohistidine; by autocatalysis (H243).

In terms of processing, autophosphorylated.

It localises to the cell membrane. It catalyses the reaction ATP + protein L-histidine = ADP + protein N-phospho-L-histidine.. Its function is as follows. Member of the two-component regulatory system ArlS/ArlR. ArlS probably functions as a sensor protein kinase which is autophosphorylated at a histidine residue and transfers its phosphate group to ArlR. The chain is Signal transduction histidine-protein kinase ArlS (arlS) from Staphylococcus haemolyticus (strain JCSC1435).